Consider the following 223-residue polypeptide: Fibronectin type III domain-containing protein 10 (223 aa).

Positions 1–19 (MRAPPLLLLLAACAPPSGA) are cleaved as a signal peptide. Residues 20–179 (AVDPTPPGWE…FTAEPAAMQE (160 aa)) are Extracellular-facing. The 97-residue stretch at 72-168 (LASAGGSLRA…VVPPELAECV (97 aa)) folds into the Fibronectin type-III domain. 2 N-linked (GlcNAc...) asparagine glycosylation sites follow: asparagine 86 and asparagine 109. Residues 180–200 (IVVAMTAVGGSICVMLVVICL) traverse the membrane as a helical segment. Over 201–223 (LVAYITENLMHPTFRRPSLRRQP) the chain is Cytoplasmic.

The protein resides in the membrane. In Mus musculus (Mouse), this protein is Fibronectin type III domain-containing protein 10 (Fndc10).